The sequence spans 336 residues: UDP-N-acetylglucosamine--N-acetylmuramyl-(pentapeptide) pyrophosphoryl-undecaprenol N-acetylglucosamine transferase (336 aa).

Positions 102, 144, 172, and 264 each coordinate UDP-N-acetyl-alpha-D-glucosamine.

The protein belongs to the glycosyltransferase 28 family. MurG subfamily.

The protein localises to the cell membrane. It carries out the reaction di-trans,octa-cis-undecaprenyl diphospho-N-acetyl-alpha-D-muramoyl-L-alanyl-D-glutamyl-meso-2,6-diaminopimeloyl-D-alanyl-D-alanine + UDP-N-acetyl-alpha-D-glucosamine = di-trans,octa-cis-undecaprenyl diphospho-[N-acetyl-alpha-D-glucosaminyl-(1-&gt;4)]-N-acetyl-alpha-D-muramoyl-L-alanyl-D-glutamyl-meso-2,6-diaminopimeloyl-D-alanyl-D-alanine + UDP + H(+). Its pathway is cell wall biogenesis; peptidoglycan biosynthesis. Functionally, cell wall formation. Catalyzes the transfer of a GlcNAc subunit on undecaprenyl-pyrophosphoryl-MurNAc-pentapeptide (lipid intermediate I) to form undecaprenyl-pyrophosphoryl-MurNAc-(pentapeptide)GlcNAc (lipid intermediate II). The polypeptide is UDP-N-acetylglucosamine--N-acetylmuramyl-(pentapeptide) pyrophosphoryl-undecaprenol N-acetylglucosamine transferase (Rubrobacter xylanophilus (strain DSM 9941 / JCM 11954 / NBRC 16129 / PRD-1)).